The primary structure comprises 218 residues: MANALGFRDLGLIDYETAWHAMQRFTDGRGREAGDEVWLVQHPPVFTQGQSGKAEHLLLPGNIPVVQVDRGGQVTYHGPGQLVAYLMLDVRRLGFGVRDLVTRIENTLIALLADYGVTAAAKADAPGVYVDGAKIASLGLRIRNGCSFHGLALNVDMDLEPFRRINPCGYAGLAMTQLSDQAGQIEFSEVSVRLRAQLVKHLDYAEQATLTGGINQYD.

Residues 31–206 form the BPL/LPL catalytic domain; the sequence is REAGDEVWLV…QLVKHLDYAE (176 aa). Substrate contacts are provided by residues 70 to 77, 137 to 139, and 150 to 152; these read RGGQVTYH, SLG, and GLA. Cys168 functions as the Acyl-thioester intermediate in the catalytic mechanism.

The protein belongs to the LipB family.

Its subcellular location is the cytoplasm. The enzyme catalyses octanoyl-[ACP] + L-lysyl-[protein] = N(6)-octanoyl-L-lysyl-[protein] + holo-[ACP] + H(+). The protein operates within protein modification; protein lipoylation via endogenous pathway; protein N(6)-(lipoyl)lysine from octanoyl-[acyl-carrier-protein]: step 1/2. Functionally, catalyzes the transfer of endogenously produced octanoic acid from octanoyl-acyl-carrier-protein onto the lipoyl domains of lipoate-dependent enzymes. Lipoyl-ACP can also act as a substrate although octanoyl-ACP is likely to be the physiological substrate. The sequence is that of Octanoyltransferase from Pseudomonas syringae pv. tomato (strain ATCC BAA-871 / DC3000).